Here is a 267-residue protein sequence, read N- to C-terminus: Tryptophan synthase alpha chain (267 aa).

Catalysis depends on proton acceptor residues glutamate 44 and aspartate 55.

This sequence belongs to the TrpA family. As to quaternary structure, tetramer of two alpha and two beta chains.

It catalyses the reaction (1S,2R)-1-C-(indol-3-yl)glycerol 3-phosphate + L-serine = D-glyceraldehyde 3-phosphate + L-tryptophan + H2O. Its pathway is amino-acid biosynthesis; L-tryptophan biosynthesis; L-tryptophan from chorismate: step 5/5. Functionally, the alpha subunit is responsible for the aldol cleavage of indoleglycerol phosphate to indole and glyceraldehyde 3-phosphate. This Coxiella burnetii (strain Dugway 5J108-111) protein is Tryptophan synthase alpha chain.